Consider the following 192-residue polypeptide: Mitochondrial import inner membrane translocase subunit TIM18 (192 aa).

The N-terminal 42 residues, 1-42, are a transit peptide targeting the mitochondrion; the sequence is MLLFPGLKPVLNASTVIVNPVRAVFPGLVLSTKRSFYSINRL. Residues 43–88 are Mitochondrial matrix-facing; sequence NAENKINDIANTSKEASSSVQMFKPPEFSQFKDSYQKDYERIAKYT. The helical transmembrane segment at 89 to 109 threads the bilayer; that stretch reads LIPLTMVPFYASFTGGVINPL. Over 110 to 113 the chain is Mitochondrial intermembrane; that stretch reads LDAS. Residues 114–134 form a helical membrane-spanning segment; that stretch reads LSSIFLIYLQYGFTSCIIDYI. Residues 135–144 are Mitochondrial matrix-facing; that stretch reads PKEKYPRWHK. A helical transmembrane segment spans residues 145 to 165; it reads LALYCLYGGSMLSLYGIYELE. Residues 166–192 are Mitochondrial intermembrane-facing; that stretch reads TKNNGFVDLVKKLWNENDDHLYIFGRN.

Belongs to the CybS family. In terms of assembly, component of the TIM22 complex, whose core is composed of TIM18, TIM22 and TIM54, associated with the peripheral proteins MRS5/TIM12 and the 70 kDa heterohexamer composed of TIM9 and TIM10 (or TIM8 and TIM13).

The protein resides in the mitochondrion inner membrane. Functionally, component of the TIM22 complex, a complex that mediates the import and insertion of multi-pass transmembrane proteins into the mitochondrial inner membrane. The TIM22 complex forms a twin-pore translocase that uses the membrane potential as external driving force. Its role in the complex is unclear but it may be involved in the assembly and stabilization of the TIM22 complex. In Saccharomyces cerevisiae (strain ATCC 204508 / S288c) (Baker's yeast), this protein is Mitochondrial import inner membrane translocase subunit TIM18 (TIM18).